Reading from the N-terminus, the 268-residue chain is Undecaprenyl-diphosphatase (268 aa).

Helical transmembrane passes span 47–67, 83–103, 109–129, 144–164, 184–204, 218–238, and 246–266; these read FAILIQLGAILAIVALYFFKL, FIIGVLIAFLPAVIIGLIAGK, LFDPWVVCFSLIVGGAILLWV, YPLLMYLWIGVAQCLAMIPGV, AAEFSFFLAIPTMVGAFVYDF, LVAIGFVVSFITAMIVVKAFL, and FVLFAWWRVIVGTLGLIALAL.

It belongs to the UppP family.

The protein localises to the cell inner membrane. The enzyme catalyses di-trans,octa-cis-undecaprenyl diphosphate + H2O = di-trans,octa-cis-undecaprenyl phosphate + phosphate + H(+). Catalyzes the dephosphorylation of undecaprenyl diphosphate (UPP). Confers resistance to bacitracin. The polypeptide is Undecaprenyl-diphosphatase (Bradyrhizobium sp. (strain BTAi1 / ATCC BAA-1182)).